Here is a 534-residue protein sequence, read N- to C-terminus: Arginine--tRNA ligase (534 aa).

Residues 120-130 (ANPTGFLHLGH) carry the 'HIGH' region motif.

This sequence belongs to the class-I aminoacyl-tRNA synthetase family. Monomer.

The protein resides in the cytoplasm. It carries out the reaction tRNA(Arg) + L-arginine + ATP = L-arginyl-tRNA(Arg) + AMP + diphosphate. This Mesomycoplasma hyopneumoniae (strain 7448) (Mycoplasma hyopneumoniae) protein is Arginine--tRNA ligase.